Here is a 338-residue protein sequence, read N- to C-terminus: Holliday junction branch migration complex subunit RuvB (338 aa).

Residues methionine 1–tyrosine 180 are large ATPase domain (RuvB-L). ATP contacts are provided by leucine 19, arginine 20, glycine 61, lysine 64, threonine 65, threonine 66, arginine 170, tyrosine 180, and arginine 217. Threonine 65 provides a ligand contact to Mg(2+). The tract at residues threonine 181–glutamate 251 is small ATPAse domain (RuvB-S). Residues glutamate 254–arginine 338 are head domain (RuvB-H). Positions 309 and 314 each coordinate DNA.

It belongs to the RuvB family. As to quaternary structure, homohexamer. Forms an RuvA(8)-RuvB(12)-Holliday junction (HJ) complex. HJ DNA is sandwiched between 2 RuvA tetramers; dsDNA enters through RuvA and exits via RuvB. An RuvB hexamer assembles on each DNA strand where it exits the tetramer. Each RuvB hexamer is contacted by two RuvA subunits (via domain III) on 2 adjacent RuvB subunits; this complex drives branch migration. In the full resolvosome a probable DNA-RuvA(4)-RuvB(12)-RuvC(2) complex forms which resolves the HJ.

The protein resides in the cytoplasm. It carries out the reaction ATP + H2O = ADP + phosphate + H(+). The RuvA-RuvB-RuvC complex processes Holliday junction (HJ) DNA during genetic recombination and DNA repair, while the RuvA-RuvB complex plays an important role in the rescue of blocked DNA replication forks via replication fork reversal (RFR). RuvA specifically binds to HJ cruciform DNA, conferring on it an open structure. The RuvB hexamer acts as an ATP-dependent pump, pulling dsDNA into and through the RuvAB complex. RuvB forms 2 homohexamers on either side of HJ DNA bound by 1 or 2 RuvA tetramers; 4 subunits per hexamer contact DNA at a time. Coordinated motions by a converter formed by DNA-disengaged RuvB subunits stimulates ATP hydrolysis and nucleotide exchange. Immobilization of the converter enables RuvB to convert the ATP-contained energy into a lever motion, pulling 2 nucleotides of DNA out of the RuvA tetramer per ATP hydrolyzed, thus driving DNA branch migration. The RuvB motors rotate together with the DNA substrate, which together with the progressing nucleotide cycle form the mechanistic basis for DNA recombination by continuous HJ branch migration. Branch migration allows RuvC to scan DNA until it finds its consensus sequence, where it cleaves and resolves cruciform DNA. In Caldicellulosiruptor saccharolyticus (strain ATCC 43494 / DSM 8903 / Tp8T 6331), this protein is Holliday junction branch migration complex subunit RuvB.